A 334-amino-acid chain; its full sequence is Methionyl-tRNA formyltransferase (334 aa).

(6S)-5,6,7,8-tetrahydrofolate is bound at residue 111-114 (SLLP).

It belongs to the Fmt family.

It catalyses the reaction L-methionyl-tRNA(fMet) + (6R)-10-formyltetrahydrofolate = N-formyl-L-methionyl-tRNA(fMet) + (6S)-5,6,7,8-tetrahydrofolate + H(+). Its function is as follows. Attaches a formyl group to the free amino group of methionyl-tRNA(fMet). The formyl group appears to play a dual role in the initiator identity of N-formylmethionyl-tRNA by promoting its recognition by IF2 and preventing the misappropriation of this tRNA by the elongation apparatus. The chain is Methionyl-tRNA formyltransferase from Cyanothece sp. (strain PCC 7425 / ATCC 29141).